Here is a 96-residue protein sequence, read N- to C-terminus: Large ribosomal subunit protein uL23 (96 aa).

The protein belongs to the universal ribosomal protein uL23 family. As to quaternary structure, part of the 50S ribosomal subunit. Contacts protein L29, and trigger factor when it is bound to the ribosome.

One of the early assembly proteins it binds 23S rRNA. One of the proteins that surrounds the polypeptide exit tunnel on the outside of the ribosome. Forms the main docking site for trigger factor binding to the ribosome. This Caldanaerobacter subterraneus subsp. tengcongensis (strain DSM 15242 / JCM 11007 / NBRC 100824 / MB4) (Thermoanaerobacter tengcongensis) protein is Large ribosomal subunit protein uL23.